The following is a 710-amino-acid chain: FAST kinase domain-containing protein 2, mitochondrial (710 aa).

2 positions are modified to phosphoserine: serine 126 and serine 140. The RAP domain maps to 634–691 (VAVLCVSRSAYCLGSSHPRGFLAMKMRHLNAMGFHVILVNNWEMDKLEMEDAVTFLKT). Serine 708 carries the post-translational modification Phosphoserine.

It belongs to the FAST kinase family. In terms of assembly, monomer. Found in a complex with GRSF1, DDX28, DHX30 and FASTKD5. Associates with the 16S mitochondrial rRNA (16S mt-rRNA). Forms a regulatory protein-RNA complex, consisting of RCC1L, NGRN, RPUSD3, RPUSD4, TRUB2, FASTKD2 and 16S mt-rRNA. In terms of tissue distribution, expression detected in spleen, thymus, testis, ovary, colon, heart, smooth muscle, kidney, brain, lung, liver and white adipose tissue with highest expression in heart, smooth muscle and thyroid.

It is found in the mitochondrion matrix. Its subcellular location is the mitochondrion nucleoid. Its function is as follows. Plays an important role in assembly of the mitochondrial large ribosomal subunit. As a component of a functional protein-RNA module, consisting of RCC1L, NGRN, RPUSD3, RPUSD4, TRUB2, FASTKD2 and 16S mitochondrial ribosomal RNA (16S mt-rRNA), controls 16S mt-rRNA abundance and is required for intra-mitochondrial translation. May play a role in mitochondrial apoptosis. The protein is FAST kinase domain-containing protein 2, mitochondrial of Homo sapiens (Human).